The chain runs to 32 residues: Photosystem I reaction center subunit XII (32 aa).

A helical transmembrane segment spans residues 9 to 28 (VYIALVVALIPGLLAWRLAT).

Belongs to the PsaM family.

The protein localises to the cellular thylakoid membrane. The sequence is that of Photosystem I reaction center subunit XII from Nostoc sp. (strain PCC 7120 / SAG 25.82 / UTEX 2576).